A 208-amino-acid chain; its full sequence is Heart- and neural crest derivatives-expressed protein 2 (208 aa).

Disordered regions lie at residues 79–106 and 161–197; these read AGAV…TQSI and EFKK…RTGW. Residues 88 to 103 show a composition bias toward basic residues; the sequence is TVKRRPTANRKERRRT. The bHLH domain occupies 90–142; that stretch reads KRRPTANRKERRRTQSINSAFAELRECIPNVPADTKLSKIKTLRLATSYIAYL. Basic and acidic residues predominate over residues 161-178; that stretch reads EFKKTDAKEERRKKEMND.

As to quaternary structure, efficient DNA binding requires dimerization with another bHLH protein.

The protein resides in the nucleus. Essential for myocardial and pectoral fin differentiation, patterning and morphogenesis. This is Heart- and neural crest derivatives-expressed protein 2 (hand2) from Danio rerio (Zebrafish).